The following is a 602-amino-acid chain: MTRAILPDVSPDSIDPQFLEEKYDQERLKRINAAGYAKYSEVGDGELERFKVTHRLEDVASSREPVSVDTDVVIIGAGYAGILTAVRLVQNGILNFRIVEKGNGFGGTWYWNQYPGAQCDVESYIYMPLLEETGYVPTERYARGPEILKHINLIAKKWELAPKTHFQSEVSAADWTADRWTVKTRQGDEFRSRYLVTAIGPFHRPKLPGVPGINSFKGNTFHSSGWDYEASGGSATEKLTKFSDKTIGIIGTGATAVQMLPFVANSAKEVLVFQRTPAPVNVRNNGPTPPDFAKFLEPGWQLRRMDNFNKIYTGEPIDTSIVSEEWLSATLQVLFGTESDKPSDPAELEQLLARTDFQVMERIRRRVDETIKDPVTREQLKPWYATICKRPCFHDEYLECFNRPNVRLVDTDGKGVDRITEDSVVVDGKEHHVDALVFCTGFEYLSGVDRHGGFTVTGKDGVTLTERWTPGPSTYHGLYVHGFPNFFCLQTAQAGTNPNFMYTATTGSTQIGHVIAECLKDGVREVQPTKQAEDDWVKMILEGGRGMMHLMRNCTPGYMNNDGNLDEKTARRMFYPGGPTAWRKLLEAWREKGDFEGLQRTY.

Residues 108 to 111 (TWYW), 120 to 121 (DV), and Tyr126 each bind FAD. 118–120 (QCD) contacts NADP(+). NADP(+)-binding positions include 252–258 (TGATAVQ) and 275–276 (RT).

Belongs to the FAD-binding monooxygenase family. It depends on FAD as a cofactor.

It participates in secondary metabolite biosynthesis. In terms of biological role, FAD-binding monooxygenase; part of the gene cluster that mediates the biosynthesis of hypothemycin, a resorcylic acid lactone (RAL) that irreversibly inhibits a subset of protein kinases with a conserved cysteine in the ATP binding site such as human ERK2. The first step is performed by both PKSs hmp3 and hmp8 and leads to the production of 7',8'-dehydrozearalenol (DHZ). The highly reducing PKS hpm8 synthesizes the reduced hexaketide (7S,11S,2E,8E)-7,11-dihydroxy-dodeca-2,8-dienoate, which is transferred downstream to the non-reducing PKS hpm3. Hpm3 then extends the reduced hexaketide to a nonaketide, after which regioselective cyclization and macrolactonization affords DHZ. The next step is the conversion of DHZ into aigialomycin C and is performed by the O-methyltransferase hmp5, the FAD-binding monooxygenase hmp7, and the cytochrome P450 monooxygenase hmp1. The wide substrate tolerance of the hmp5 and hmp7 implies that the reactions from DHZ to aigialomycin C can occur in any order. The steps from aigialomycin C to hypothemycin are less well established. The FAD-linked oxidoreductase hmp9 presumably catalyzes oxidation of the C-6' hydroxyl to a ketone. The timing of this oxidation is important, since the resulting enone functional group is a Michael acceptor that can react spontaneously with glutathione, an abundant metabolite in fungal cells. The glutathione S-transferase hmp2 catalyzes cis-trans isomerization of the 7',8' double bond with equilibrium favoring the trans isomer. The hpm6-encoded transporter might preferentially pump hypothemycin out of the cell relative to the trans isomer aigialomycin A. The cis-to-trans isomerization may be coupled with C-4' hydroxylation, since all known hypothemycin analogs containing the enone functional group also have hydroxyl groups at both C-4' and C-5'. This chain is FAD-binding monooxygenase hmp7, found in Hypomyces subiculosus (Nectria subiculosa).